The chain runs to 169 residues: Lipoprotein signal peptidase (169 aa).

A run of 4 helical transmembrane segments spans residues 4 to 24 (PICS…ILDI), 29 to 49 (WVMA…FNLT), 70 to 90 (WFFA…MYRS), and 101 to 121 (YALI…HGAV). Residues Asp-123 and Asp-141 contribute to the active site. Residues 137-157 (FNLADVAISIGAVLVIFEGFL) form a helical membrane-spanning segment.

This sequence belongs to the peptidase A8 family.

The protein localises to the cell inner membrane. The catalysed reaction is Release of signal peptides from bacterial membrane prolipoproteins. Hydrolyzes -Xaa-Yaa-Zaa-|-(S,diacylglyceryl)Cys-, in which Xaa is hydrophobic (preferably Leu), and Yaa (Ala or Ser) and Zaa (Gly or Ala) have small, neutral side chains.. It participates in protein modification; lipoprotein biosynthesis (signal peptide cleavage). In terms of biological role, this protein specifically catalyzes the removal of signal peptides from prolipoproteins. The chain is Lipoprotein signal peptidase from Yersinia pseudotuberculosis serotype O:1b (strain IP 31758).